The primary structure comprises 263 residues: Undecaprenyl-diphosphatase 2 (263 aa).

8 consecutive transmembrane segments (helical) span residues 17–37 (TEFL…LIGF), 42–62 (AKVF…VIFW), 83–103 (LHII…HSAI), 106–126 (VLFG…LMIV), 142–162 (ITYK…WPGF), 183–203 (AEYT…LDLI), 216–236 (LFAT…VSFL), and 242–262 (VKLT…YFFI).

It belongs to the UppP family.

It is found in the cell membrane. The enzyme catalyses di-trans,octa-cis-undecaprenyl diphosphate + H2O = di-trans,octa-cis-undecaprenyl phosphate + phosphate + H(+). In terms of biological role, catalyzes the dephosphorylation of undecaprenyl diphosphate (UPP). Confers resistance to bacitracin. In Bacillus anthracis, this protein is Undecaprenyl-diphosphatase 2.